A 54-amino-acid polypeptide reads, in one-letter code: uncharacterized protein (54 aa).

Residues 6–26 form a helical membrane-spanning segment; sequence ILIYLLIFVAGIVIGKIRINV.

Its subcellular location is the host membrane. This is an uncharacterized protein from Acidianus convivator (ABV).